A 613-amino-acid chain; its full sequence is Protein starmaker (613 aa).

The signal sequence occupies residues 1 to 20 (MLSRTVFVPLILAFVGVSIS). The segment at 42 to 613 (FTVQFNVGTP…DGRKTSMPIS (572 aa)) is disordered. 5 stretches are compositionally biased toward basic and acidic residues: residues 62 to 72 (DGKDSAEKNEA), 117 to 132 (SAEK…DKPD), 147 to 193 (DASH…KPEG), 206 to 284 (SAEK…KSDD), and 291 to 449 (DEQK…HSDS). Over residues 450–465 (DSDSDSDSDSDSDSDS) the composition is skewed to acidic residues. Composition is skewed to basic and acidic residues over residues 467 to 482 (SNSR…SSES), 509 to 521 (DKDS…KTDS), and 538 to 554 (DDSK…TAEK). The span at 555–573 (TDEDSHDVSDDDDDIDAHD) shows a compositional bias: acidic residues. Residues 574-607 (DEAGVEHGTDEASKPHQEPDHHDDTTHGSDDGRK) show a composition bias toward basic and acidic residues.

It localises to the secreted. Essential for the formation of otoliths in the inner ear of developing larvae and for the perception of gravity and acceleration. May be one of the organic components of the ortholiths. This is Protein starmaker (stm) from Danio rerio (Zebrafish).